Consider the following 322-residue polypeptide: MTSLSWLRALDVADIAAITDLLAAAERADGNGGVSEDVRLTLRPGPVGGGVEHLVARAGSAVVGYAALGGTATERQAELVVHPDHRRRGVGTALVHALFATTSPVSLNIWAHGDTPAAAALATRNGFDRERVLLQLRRPLASVRPGDPDDLPRPIIPADVTIRAFEVGVDEEAWLAVNAEAFADHPEQGRWTLDDLRAREGEPWFDPAGFFLAERNGALLGFHWTKVHPQDPVPEHPAATDQPAGQPGPIGEVYVVGVASAAAGTGLGAALTIVGLRHLRDIGLASVMLYVDEDNARAVRLYTRLGFRRHAADVSYRRPARG.

N-acetyltransferase domains lie at 5 to 150 (SWLR…DPDD) and 160 to 322 (VTIR…PARG). Glu36 is a binding site for 1D-myo-inositol 2-(L-cysteinylamino)-2-deoxy-alpha-D-glucopyranoside. Residues 79–81 (LVV) and 87–92 (RRGVGT) contribute to the acetyl-CoA site. 1D-myo-inositol 2-(L-cysteinylamino)-2-deoxy-alpha-D-glucopyranoside is bound by residues Glu187, Lys226, and Glu252. 256–258 (VGV) contacts acetyl-CoA. Tyr290 contributes to the 1D-myo-inositol 2-(L-cysteinylamino)-2-deoxy-alpha-D-glucopyranoside binding site. 295 to 300 (NARAVR) is an acetyl-CoA binding site.

It belongs to the acetyltransferase family. MshD subfamily. As to quaternary structure, monomer.

It carries out the reaction 1D-myo-inositol 2-(L-cysteinylamino)-2-deoxy-alpha-D-glucopyranoside + acetyl-CoA = mycothiol + CoA + H(+). Its function is as follows. Catalyzes the transfer of acetyl from acetyl-CoA to desacetylmycothiol (Cys-GlcN-Ins) to form mycothiol. This Parafrankia sp. (strain EAN1pec) protein is Mycothiol acetyltransferase.